The following is a 103-amino-acid chain: Sec-independent protein translocase protein TatA (103 aa).

The helical transmembrane segment at 1–21 (MGNIFSPTHLIVILLIVLVLF) threads the bilayer. The disordered stretch occupies residues 60–103 (YSKTTDVRPQQSQPLSVKRAAERRKGSSSFKEGKASVAKKQRGK).

The protein belongs to the TatA/E family. The Tat system comprises two distinct complexes: a TatABC complex, containing multiple copies of TatA, TatB and TatC subunits, and a separate TatA complex, containing only TatA subunits. Substrates initially bind to the TatABC complex, which probably triggers association of the separate TatA complex to form the active translocon.

It localises to the cell inner membrane. Its function is as follows. Part of the twin-arginine translocation (Tat) system that transports large folded proteins containing a characteristic twin-arginine motif in their signal peptide across membranes. TatA could form the protein-conducting channel of the Tat system. This Bartonella quintana (strain Toulouse) (Rochalimaea quintana) protein is Sec-independent protein translocase protein TatA.